A 178-amino-acid chain; its full sequence is Conodipine-P2 (178 aa).

An N-terminal signal peptide occupies residues 1-24 (MKLLAPVLWAMAALGVTWLVAVDS). 4-hydroxyproline occurs at positions 38, 42, and 49. His54 is a catalytic residue. A propeptide spans 98–130 (KREVTSHRATSIAHSRLWKTALDQKSFLNRKAR) (interchain peptide). Gln131 is subject to Pyrrolidone carboxylic acid. Pro137 is modified (4-hydroxyproline).

The protein belongs to the phospholipase A2 family. Group IX subfamily. As to quaternary structure, heterodimer of an alpha and a beta chain; probably disulfide-linked. It depends on Ca(2+) as a cofactor. As to expression, expressed by the venom duct.

It localises to the secreted. The enzyme catalyses a 1,2-diacyl-sn-glycero-3-phosphocholine + H2O = a 1-acyl-sn-glycero-3-phosphocholine + a fatty acid + H(+). In terms of biological role, catalyzes the calcium-dependent hydrolysis of the 2-acyl groups in 3-sn-phosphoglycerides. The protein is Conodipine-P2 of Conus purpurascens (Purple cone).